A 732-amino-acid polypeptide reads, in one-letter code: Catalase-peroxidase (732 aa).

Residues 1–29 (MTTESKCPFSGGGKPNTPRRGPSNQDWWP) form a disordered region. The segment at residues 96–223 (WHSAGTYRIG…LAAVQMGLIY (128 aa)) is a cross-link (tryptophyl-tyrosyl-methioninium (Trp-Tyr) (with M-249)). The active-site Proton acceptor is the His-97. A cross-link (tryptophyl-tyrosyl-methioninium (Tyr-Met) (with W-96)) is located at residues 223–249 (YVNPEGPDGNPDPVAAARDIRETFARM). Heme b is bound at residue His-264.

It belongs to the peroxidase family. Peroxidase/catalase subfamily. In terms of assembly, homodimer or homotetramer. Heme b is required as a cofactor. Post-translationally, formation of the three residue Trp-Tyr-Met cross-link is important for the catalase, but not the peroxidase activity of the enzyme.

The enzyme catalyses H2O2 + AH2 = A + 2 H2O. The catalysed reaction is 2 H2O2 = O2 + 2 H2O. Functionally, bifunctional enzyme with both catalase and broad-spectrum peroxidase activity. This Serratia proteamaculans (strain 568) protein is Catalase-peroxidase.